A 178-amino-acid chain; its full sequence is Dual-action ribosomal maturation protein DarP (178 aa).

This sequence belongs to the DarP family.

It localises to the cytoplasm. Functionally, member of a network of 50S ribosomal subunit biogenesis factors which assembles along the 30S-50S interface, preventing incorrect 23S rRNA structures from forming. Promotes peptidyl transferase center (PTC) maturation. In Haemophilus influenzae (strain 86-028NP), this protein is Dual-action ribosomal maturation protein DarP.